The following is a 747-amino-acid chain: Fibroblast growth factor receptor (747 aa).

An N-terminal signal peptide occupies residues 1–24; sequence MIQLQNTFIFIALTIFTSASTTSL. Topologically, residues 25–288 are extracellular; that stretch reads KNETKPLNTI…TEEIPQDTHY (264 aa). N-linked (GlcNAc...) asparagine glycans are attached at residues Asn26, Asn42, and Asn63. The tract at residues 47 to 68 is disordered; that stretch reads EEDLFDTNGAPKSDTVNASTTT. Ig-like C2-type domains follow at residues 74–167 and 175–267; these read PRWV…YELD and PPVL…AWLT. Cys99 and Cys151 are joined by a disulfide. N-linked (GlcNAc...) asparagine glycosylation is found at Asn161, Asn185, Asn217, Asn227, and Asn240. A disulfide bridge links Cys198 with Cys251. The helical transmembrane segment at 289–309 threads the bilayer; the sequence is LIYIFGVVCFIILLAFIVYMC. Over 310-747 the chain is Cytoplasmic; it reads NSRYQNKDPP…NGHARMQSDV (438 aa). The Protein kinase domain maps to 377–660; it reads ILLHERIDEG…QLVEDLDRML (284 aa). ATP-binding positions include 383-391 and Lys412; that span reads IDEGFFGQV. Residue Asp525 is the Proton acceptor of the active site. Phosphotyrosine; by autocatalysis is present on Tyr556. Residues 679–731 are disordered; sequence YLPSDVDSNEDTESRDSANATGEDSDSVFEPIDGHGAHAYEVDEAGPLLNPQP. Residues 710-719 show a composition bias toward basic and acidic residues; the sequence is IDGHGAHAYE.

It belongs to the protein kinase superfamily. Tyr protein kinase family. Fibroblast growth factor receptor subfamily.

It is found in the membrane. It carries out the reaction L-tyrosyl-[protein] + ATP = O-phospho-L-tyrosyl-[protein] + ADP + H(+). Functionally, receptor for basic fibroblast growth factor. The sequence is that of Fibroblast growth factor receptor (FGFR) from Ciona intestinalis (Transparent sea squirt).